A 197-amino-acid chain; its full sequence is MKVKMSKLIILSGPSGVGKGTIESLLLKNKNLLIKLAISATTREKRRDEINGVNYFFLTVQEFKEKIENDEFIEWSCHFNNYYGTLKSQIKFIQSQNFIPLLEIDTTGAKNIIENYKNKGELSQLLTIFILPPSIESLKNRIQKRLTETNIQINQRLEKAKAEIKIKNLFKFQVVNDNLEECVAQIEKIISKEIQKT.

Residues 6–191 (SKLIILSGPS…CVAQIEKIIS (186 aa)) form the Guanylate kinase-like domain. 13–20 (GPSGVGKG) serves as a coordination point for ATP.

It belongs to the guanylate kinase family.

Its subcellular location is the cytoplasm. It carries out the reaction GMP + ATP = GDP + ADP. Its function is as follows. Essential for recycling GMP and indirectly, cGMP. This chain is Guanylate kinase, found in Mesomycoplasma hyopneumoniae (strain 232) (Mycoplasma hyopneumoniae).